We begin with the raw amino-acid sequence, 407 residues long: MSYPIERVRADFPLLASEVNGQPLAYLDSAASAQKPQSVIEREAEFYRHEYAAVHRGIHTLSAQATSAMEAVREQVAAFINAASVEEIVFVRGTTEAINLVANSYGRTFIQPGDNLIITEMEHHANIVPWQMLAEARGVEVRVLPLAEDGSLDVAQLPGLLDERTRLLAVTQISNVLGALNPVKTMIAQAKAVGAVTLVDGAQSIMHQTVDVQDLDCDFFVFSGHKIYGPSGIGVLYGKRDLLQAMPPWEGGGAMIRQVSLRTGTTYADSPWRFEAGSPNTGGIMGLGAALDYVTALGREEIQRYESSLMKYALEALKQVPDLTLYGPAERHGVIAFNLGQHHAYDVGSFLDRYGIAIRTGHHCAMPLMEHYGVPSMCRASLAVYTTREEIDRLVAGLQRIHRLLGS.

Lys226 is modified (N6-(pyridoxal phosphate)lysine). The active-site Cysteine persulfide intermediate is the Cys364.

Belongs to the class-V pyridoxal-phosphate-dependent aminotransferase family. Csd subfamily. Homodimer. Interacts with SufE and the SufBCD complex composed of SufB, SufC and SufD. The interaction with SufE is required to mediate the direct transfer of the sulfur atom from the S-sulfanylcysteine. The cofactor is pyridoxal 5'-phosphate.

The protein localises to the cytoplasm. It catalyses the reaction (sulfur carrier)-H + L-cysteine = (sulfur carrier)-SH + L-alanine. The enzyme catalyses L-selenocysteine + AH2 = hydrogenselenide + L-alanine + A + H(+). It functions in the pathway cofactor biosynthesis; iron-sulfur cluster biosynthesis. In terms of biological role, cysteine desulfurases mobilize the sulfur from L-cysteine to yield L-alanine, an essential step in sulfur metabolism for biosynthesis of a variety of sulfur-containing biomolecules. Component of the suf operon, which is activated and required under specific conditions such as oxidative stress and iron limitation. Acts as a potent selenocysteine lyase in vitro, that mobilizes selenium from L-selenocysteine. Selenocysteine lyase activity is however unsure in vivo. The chain is Cysteine desulfurase from Pectobacterium carotovorum subsp. carotovorum (strain PC1).